The primary structure comprises 5628 residues: Polyketide synthase ThaG (5628 aa).

The region spanning 13 to 448 (HDDIAVIGIA…GTNAHVVLRE (436 aa)) is the Ketosynthase family 3 (KS3) 1 domain. Catalysis depends on for beta-ketoacyl synthase 1 activity residues Cys-184, His-319, and His-361. 2 disordered regions span residues 552–613 (GNLV…DGPT) and 1156–1183 (ASPG…RAEA). Residues 559–589 (GPHDEQADHDGSGEHGEHGERARAGADDLSR) show a composition bias toward basic and acidic residues. Low complexity predominate over residues 1156–1173 (ASPGAASSGAAAPNAASD). Basic and acidic residues predominate over residues 1174–1183 (ASRDTERAEA). Residues 1209–1286 (AHGSARLPAL…RLAGHLATRL (78 aa)) enclose the Carrier 1 domain. At Ser-1246 the chain carries O-(pantetheine 4'-phosphoryl)serine. The Ketosynthase family 3 (KS3) 2 domain occupies 1373-1781 (YEPIAIVGMS…GTNAHVIVEA (409 aa)). Active-site for beta-ketoacyl synthase 2 activity residues include Cys-1529, His-1664, and His-1704. The tract at residues 1967-2099 (AREPGARERA…GVVDELNEPA (133 aa)) is N-terminal hotdog fold 1. The PKS/mFAS DH 1 domain maps to 1967–2261 (AREPGARERA…SARWRKLAGA (295 aa)). The Proton acceptor; for dehydratase activity 1 role is filled by His-1999. The C-terminal hotdog fold 1 stretch occupies residues 2113–2261 (AGERVDGAAL…SARWRKLAGA (149 aa)). Asp-2175 acts as the Proton donor; for dehydratase activity 1 in catalysis. The segment at 2426–2446 (DADEDDRDGREPAGGPPLRDD) is disordered. The Carrier 2 domain occupies 2702 to 2780 (PAARVDLHAL…AIARALDASA (79 aa)). Positions 2817–2836 (TPPDAGAPQRGAHAAAAEGS) are disordered. Residues 2822-2835 (GAPQRGAHAAAAEG) are compositionally biased toward low complexity. Residues 2862-2935 (ARVGARLSAL…ELTDYFVRRH (74 aa)) form the Carrier 3 domain. Ser-2896 carries the O-(pantetheine 4'-phosphoryl)serine modification. Residues 3005–3430 (ADAIAVIGLA…GANAHVIVRE (426 aa)) enclose the Ketosynthase family 3 (KS3) 3 domain. Active-site for beta-ketoacyl synthase 3 activity residues include Cys-3175, His-3310, and His-3351. The disordered stretch occupies residues 3526 to 3546 (PGKKQLRGNGRARRGDAPPAG). An N-terminal hotdog fold 2 region spans residues 3621-3743 (HPMLDANRSE…GRSPSRAARG (123 aa)). Positions 3621 to 3895 (HPMLDANRSE…SRAAASWRTA (275 aa)) constitute a PKS/mFAS DH 2 domain. His-3650 (proton acceptor; for dehydratase activity 2) is an active-site residue. The C-terminal hotdog fold 2 stretch occupies residues 3758-3895 (RAAPAFDADA…SRAAASWRTA (138 aa)). The active-site Proton donor; for dehydratase activity 2 is the Asp-3818. Positions 3917–3942 (PAAESPSAATSTSAATSPAISTSAAT) are disordered. Residues 4840-4914 (TRTAALLRSL…ALAAYVGSQL (75 aa)) form the Carrier 4 domain. Ser-4874 carries the O-(pantetheine 4'-phosphoryl)serine modification. The tract at residues 4960 to 4992 (APRARTGADAPDTSLASSASSISSARASSPASP) is disordered. In terms of domain architecture, Ketosynthase family 3 (KS3) 4 spans 4998–5424 (SFDVAIVGAS…GVNAHVVLEE (427 aa)). Catalysis depends on for beta-ketoacyl synthase 4 activity residues Cys-5158, His-5293, and His-5339. A Carrier 5 domain is found at 5470-5544 (ARIEAVIRDA…ALRDHVAERI (75 aa)). At Ser-5504 the chain carries O-(pantetheine 4'-phosphoryl)serine. A disordered region spans residues 5573–5603 (VSEATEASDASEASDASEASEASEASEASKA).

Requires pantetheine 4'-phosphate as cofactor.

It is found in the cytoplasm. It functions in the pathway antibiotic biosynthesis. Functionally, involved in production of the polyketide antibiotic thailandamide. In Burkholderia thailandensis (strain ATCC 700388 / DSM 13276 / CCUG 48851 / CIP 106301 / E264), this protein is Polyketide synthase ThaG.